A 465-amino-acid chain; its full sequence is UDP-N-acetylmuramate--L-alanine ligase (465 aa).

ATP is bound at residue 114–120 (GTHGKTT).

Belongs to the MurCDEF family.

It is found in the cytoplasm. The catalysed reaction is UDP-N-acetyl-alpha-D-muramate + L-alanine + ATP = UDP-N-acetyl-alpha-D-muramoyl-L-alanine + ADP + phosphate + H(+). Its pathway is cell wall biogenesis; peptidoglycan biosynthesis. Cell wall formation. This Chlorobium phaeobacteroides (strain BS1) protein is UDP-N-acetylmuramate--L-alanine ligase.